The following is a 548-amino-acid chain: Phenylalanine--tRNA ligase beta subunit (548 aa).

Residues 275-350 (LKEDVLETTS…IAYGYNKFSG (76 aa)) form the B5 domain. Mg(2+) is bound by residues aspartate 328, aspartate 334, glutamate 337, and glutamate 338.

The protein belongs to the phenylalanyl-tRNA synthetase beta subunit family. Type 2 subfamily. As to quaternary structure, tetramer of two alpha and two beta subunits. Requires Mg(2+) as cofactor.

The protein resides in the cytoplasm. It catalyses the reaction tRNA(Phe) + L-phenylalanine + ATP = L-phenylalanyl-tRNA(Phe) + AMP + diphosphate + H(+). The polypeptide is Phenylalanine--tRNA ligase beta subunit (Methanocaldococcus jannaschii (strain ATCC 43067 / DSM 2661 / JAL-1 / JCM 10045 / NBRC 100440) (Methanococcus jannaschii)).